Here is a 496-residue protein sequence, read N- to C-terminus: Putative (R)-citramalate synthase CimA (496 aa).

In terms of domain architecture, Pyruvate carboxyltransferase spans 3–253 (VRVLDTTLRD…DTSINIEMLY (251 aa)).

It belongs to the alpha-IPM synthase/homocitrate synthase family. As to quaternary structure, homodimer.

It carries out the reaction pyruvate + acetyl-CoA + H2O = (3R)-citramalate + CoA + H(+). Its pathway is amino-acid biosynthesis; L-isoleucine biosynthesis; 2-oxobutanoate from pyruvate: step 1/3. Functionally, catalyzes the condensation of pyruvate and acetyl-coenzyme A to form (R)-citramalate. The polypeptide is Putative (R)-citramalate synthase CimA (Methanothermobacter thermautotrophicus (strain ATCC 29096 / DSM 1053 / JCM 10044 / NBRC 100330 / Delta H) (Methanobacterium thermoautotrophicum)).